The chain runs to 329 residues: L-threonine dehydratase catabolic TdcB (329 aa).

An AMP-binding site is contributed by 53-54 (RT). Lysine 58 carries the N6-(pyridoxal phosphate)lysine modification. Residues glutamine 88, 119–120 (DY), and asparagine 314 contribute to the AMP site.

The protein belongs to the serine/threonine dehydratase family. As to quaternary structure, in the native structure, TdcB is in a dimeric form, whereas in the TdcB-AMP complex, it exists in a tetrameric form (dimer of dimers). Pyridoxal 5'-phosphate serves as cofactor.

The enzyme catalyses L-threonine = 2-oxobutanoate + NH4(+). The catalysed reaction is L-serine = pyruvate + NH4(+). It participates in amino-acid degradation; L-threonine degradation via propanoate pathway; propanoate from L-threonine: step 1/4. With respect to regulation, each protein molecule can bind up to four molecules of AMP, which act as an allosteric activator to the enzyme. Functionally, catalyzes the anaerobic formation of alpha-ketobutyrate and ammonia from threonine in a two-step reaction. The first step involved a dehydration of threonine and a production of enamine intermediates (aminocrotonate), which tautomerizes to its imine form (iminobutyrate). Both intermediates are unstable and short-lived. The second step is the nonenzymatic hydrolysis of the enamine/imine intermediates to form 2-ketobutyrate and free ammonia. In the low water environment of the cell, the second step is accelerated by RidA. TdcB also dehydrates serine to yield pyruvate via analogous enamine/imine intermediates. The polypeptide is L-threonine dehydratase catabolic TdcB (tdcB) (Escherichia coli O157:H7).